The sequence spans 65 residues: Small ribosomal subunit protein eS17 (65 aa).

The protein belongs to the eukaryotic ribosomal protein eS17 family.

The polypeptide is Small ribosomal subunit protein eS17 (Methanobrevibacter smithii (strain ATCC 35061 / DSM 861 / OCM 144 / PS)).